The following is a 417-amino-acid chain: NADH-quinone oxidoreductase subunit D (417 aa).

Belongs to the complex I 49 kDa subunit family. In terms of assembly, NDH-1 is composed of 14 different subunits. Subunits NuoB, C, D, E, F, and G constitute the peripheral sector of the complex.

Its subcellular location is the cell inner membrane. It catalyses the reaction a quinone + NADH + 5 H(+)(in) = a quinol + NAD(+) + 4 H(+)(out). NDH-1 shuttles electrons from NADH, via FMN and iron-sulfur (Fe-S) centers, to quinones in the respiratory chain. The immediate electron acceptor for the enzyme in this species is believed to be ubiquinone. Couples the redox reaction to proton translocation (for every two electrons transferred, four hydrogen ions are translocated across the cytoplasmic membrane), and thus conserves the redox energy in a proton gradient. In Paracidovorax citrulli (strain AAC00-1) (Acidovorax citrulli), this protein is NADH-quinone oxidoreductase subunit D.